We begin with the raw amino-acid sequence, 111 residues long: Nucleoid-associated protein Teth39_2199 (111 aa).

This sequence belongs to the YbaB/EbfC family. Homodimer.

It localises to the cytoplasm. The protein localises to the nucleoid. Functionally, binds to DNA and alters its conformation. May be involved in regulation of gene expression, nucleoid organization and DNA protection. The chain is Nucleoid-associated protein Teth39_2199 from Thermoanaerobacter pseudethanolicus (strain ATCC 33223 / 39E) (Clostridium thermohydrosulfuricum).